The sequence spans 289 residues: Pantoate kinase (289 aa).

It belongs to the GHMP kinase family. PoK subfamily.

It carries out the reaction (R)-pantoate + ATP = (R)-4-phosphopantoate + ADP + H(+). Its pathway is cofactor biosynthesis; coenzyme A biosynthesis. Functionally, phosphorylates (R)-pantoate to form (R)-4-phosphopantoate in the CoA biosynthesis pathway. ATP is the best phosphate donor. Can be replaced with UTP, with lower efficiency. In Methanospirillum hungatei JF-1 (strain ATCC 27890 / DSM 864 / NBRC 100397 / JF-1), this protein is Pantoate kinase.